The chain runs to 285 residues: MQTAHSVAQVREHVRGWHRKGQSVGFVPTMGNLHDGHISLVREARTRCDVVVVSIFVNPTQFGPNEDFDRYPRTLDADAAALVEAGADLLFAPSVEEMYPLGQNQTWVDVDQLGDHLCGASREGHFRGVTTVVSKLLNIVQPDVAIFGEKDFQQLAILRRMCEELLFPVKIVGAATSRETDGLARSSRNGFLSESERTLAPQLYAHLQQVKTEIIGGERNYRALESRTSQSLNSTGFSVDYITIANARTLAPAGPDDTDLIVAVAAKLGSTRLIDNISLAVVRDR.

Residue 30–37 (MGNLHDGH) coordinates ATP. H37 (proton donor) is an active-site residue. Q61 contributes to the (R)-pantoate binding site. Residue Q61 participates in beta-alanine binding. 148 to 151 (GEKD) provides a ligand contact to ATP. Q154 contacts (R)-pantoate. 185–188 (RSSR) lines the ATP pocket.

Belongs to the pantothenate synthetase family. In terms of assembly, homodimer.

The protein localises to the cytoplasm. The catalysed reaction is (R)-pantoate + beta-alanine + ATP = (R)-pantothenate + AMP + diphosphate + H(+). It functions in the pathway cofactor biosynthesis; (R)-pantothenate biosynthesis; (R)-pantothenate from (R)-pantoate and beta-alanine: step 1/1. Its function is as follows. Catalyzes the condensation of pantoate with beta-alanine in an ATP-dependent reaction via a pantoyl-adenylate intermediate. The polypeptide is Pantothenate synthetase (Alcanivorax borkumensis (strain ATCC 700651 / DSM 11573 / NCIMB 13689 / SK2)).